The primary structure comprises 282 residues: Elongation factor Ts (282 aa).

Residues 80-83 (TDFV) form an involved in Mg(2+) ion dislocation from EF-Tu region.

It belongs to the EF-Ts family.

The protein localises to the cytoplasm. Associates with the EF-Tu.GDP complex and induces the exchange of GDP to GTP. It remains bound to the aminoacyl-tRNA.EF-Tu.GTP complex up to the GTP hydrolysis stage on the ribosome. The polypeptide is Elongation factor Ts (Chlamydia felis (strain Fe/C-56) (Chlamydophila felis)).